The following is a 2787-amino-acid chain: Serine/threonine-protein kinase TEL1 (2787 aa).

In terms of domain architecture, FAT spans 1734–2326 (EICQISLKIK…LYSVMSILLY (593 aa)). The PI3K/PI4K catalytic domain maps to 2434 to 2746 (NETVGITTTG…ENQESYRALK (313 aa)). Positions 2440–2446 (TTTGLSL) are G-loop. The tract at residues 2609 to 2617 (GLGDRHLNN) is catalytic loop. An activation loop region spans residues 2629–2653 (HIDLGIAFDQGKLLPIPELVPFRLT). Positions 2755-2787 (NGLSVESSVQDLIQQATDPSNLSVIYMGWSPFY) constitute an FATC domain.

Belongs to the PI3/PI4-kinase family. ATM subfamily. As to quaternary structure, interacts with XRS2 and associates with DNA double-strand breaks.

Its subcellular location is the nucleus. The protein localises to the chromosome. The protein resides in the telomere. It carries out the reaction L-seryl-[protein] + ATP = O-phospho-L-seryl-[protein] + ADP + H(+). It catalyses the reaction L-threonyl-[protein] + ATP = O-phospho-L-threonyl-[protein] + ADP + H(+). Functionally, serine/threonine protein kinase which activates checkpoint signaling upon genotoxic stresses such as ionizing radiation (IR), ultraviolet light (UV), or DNA replication stalling, thereby acting as a DNA damage sensor. Recognizes the substrate consensus sequence [ST]-Q. Recruited by the MRX-complex to sites of DNA lesions immediately after damage to initiate non-homologous end-joining (NHEJ). Subsequently displaced by the RPA complex in a reaction probably involving the SAE2 protein. Phosphorylates MRE11 and XRS2, 2 subunits of the MRX-complex. The phosphorylation of MRE11 is a feedback response from the checkpoint signaling pathway. Phosphorylates RAD9, CHK1 and RAD53, leading to the activation of the CHK1 and RAD23 kinases involved in the DNA damage response cascade. Phosphorylates histone H2A to form H2AS128ph (gamma-H2A) at sites of DNA damage, also involved in the regulation of DNA damage response mechanism. Also phosphorylates SLX4 and RTT107 which are involved in genome stability. Required for the control of telomere length and genome stability. The polypeptide is Serine/threonine-protein kinase TEL1 (TEL1) (Saccharomyces cerevisiae (strain ATCC 204508 / S288c) (Baker's yeast)).